We begin with the raw amino-acid sequence, 81 residues long: MKLTWMMIVAVLFLTAWTFVTADDTRYKLENPFLKARNELQKLEASQLNERGCLDPGYFCGTPFLGAYCCGGICLIVCIET.

A signal peptide spans Met-1–Ala-22. A propeptide spanning residues Asp-23–Arg-51 is cleaved from the precursor. Cystine bridges form between Cys-53-Cys-70, Cys-60-Cys-74, and Cys-69-Cys-78.

The protein belongs to the conotoxin O1 superfamily. Expressed by the venom duct.

Its subcellular location is the secreted. This is Conotoxin ViKr92 from Conus virgo (Virgin cone).